The primary structure comprises 854 residues: Patatin-like phospholipase domain-containing protein CHGG_02900 (854 aa).

Disordered regions lie at residues 1 to 29 (MAGPGYDRVDSKDDEPPNIQIPSRTYGFP), 58 to 138 (LSAP…PPLS), and 159 to 186 (QRRVARAKTAPQSSSRNDKKKKRARSKD). Over residues 96 to 116 (DLARRPESSGVGFHDEDRTAR) the composition is skewed to basic and acidic residues. Over residues 119–132 (PAGAATAAAAGVAT) the composition is skewed to low complexity. A helical transmembrane segment spans residues 199–219 (WPLLGVVTCWLVGLSVVHVLA). Residues 387 to 578 (LCLSGGATFA…RTDIPIKALN (192 aa)) form the PNPLA domain. The GXSXG signature appears at 418-422 (GTSGG). Residue Ser420 is the Nucleophile of the active site. The active-site Proton acceptor is Asp565. 2 disordered regions span residues 724-776 (RENR…SILS) and 791-830 (RGGIGSGETESEDETSDLDADFYEGITYDGGDDDAGLEFG). Residues 729-751 (GGGLGDGGVGSSGGAGGGAGGGQ) are compositionally biased toward gly residues. The span at 752–761 (AEAVAGQAAG) shows a compositional bias: low complexity. Positions 799–812 (TESEDETSDLDADF) are enriched in acidic residues.

It belongs to the PLPL family.

The protein localises to the membrane. In terms of biological role, probable lipid hydrolase. The polypeptide is Patatin-like phospholipase domain-containing protein CHGG_02900 (Chaetomium globosum (strain ATCC 6205 / CBS 148.51 / DSM 1962 / NBRC 6347 / NRRL 1970) (Soil fungus)).